The chain runs to 222 residues: Eukaryotic translation initiation factor 3 subunit K (222 aa).

The 163-residue stretch at 46 to 208 folds into the PCI domain; it reads YDLEANLAVL…KIKTKNITEK (163 aa).

It belongs to the eIF-3 subunit K family. As to quaternary structure, component of the eukaryotic translation initiation factor 3 (eIF-3) complex. The eIF-3 complex interacts with pix.

Its subcellular location is the cytoplasm. In terms of biological role, component of the eukaryotic translation initiation factor 3 (eIF-3) complex, which is involved in protein synthesis of a specialized repertoire of mRNAs and, together with other initiation factors, stimulates binding of mRNA and methionyl-tRNAi to the 40S ribosome. The eIF-3 complex specifically targets and initiates translation of a subset of mRNAs involved in cell proliferation. This Drosophila willistoni (Fruit fly) protein is Eukaryotic translation initiation factor 3 subunit K.